Consider the following 182-residue polypeptide: Organic solute transporter subunit beta (182 aa).

An N-terminal signal peptide occupies residues 1–20 (MSGLLKYLFGCFILCLLLQG). The Extracellular portion of the chain corresponds to 21–64 (KTHMTSATISKPHETIDIEKQNMTGERNSTLAQQLSFPMEDPTN). N-linked (GlcNAc...) asparagine glycans are attached at residues Asn42 and Asn48. The helical transmembrane segment at 65–85 (WNYAILALAFVVLFLAFLILA) threads the bilayer. At 86-182 (QNSRANRTRK…LYTDSKEDDV (97 aa)) the chain is on the cytoplasmic side.

The protein belongs to the OST-beta family. In terms of assembly, interacts with slc51a. The Ost-alpha/Ost-beta complex is a heterodimer composed of alpha (slc51a) and beta (slc51b) subunit; may induce the transport of slc51a from the endoplasmic reticulum to the plasma membrane. Expressed in liver.

The protein resides in the cell membrane. Its function is as follows. Essential component of the Ost-alpha/Ost-beta complex, a heterodimer that acts as the intestinal basolateral transporter responsible for bile acid export from enterocytes into portal blood. Efficiently transports the major species of bile acids. May modulate slc51a glycosylation, membrane trafficking and stability activities. Able to transport taurocholate, estrone sulfate, digoxin, and prostaglandin E(2), but not p-aminohippurate or S-dinitrophenyl glutathione. This Leucoraja erinaceus (Little skate) protein is Organic solute transporter subunit beta (slc51b).